A 1064-amino-acid polypeptide reads, in one-letter code: Importin-13 homolog A (1064 aa).

Residues A40 to T109 form the Importin N-terminal domain. 2 disordered regions span residues T695–N722 and N839–N860. The span at N700 to N722 shows a compositional bias: low complexity.

This sequence belongs to the importin beta family. In terms of assembly, forms a complex with an importin alpha subunit.

It localises to the cytoplasm. The protein resides in the nucleus envelope. Its function is as follows. Required for nuclear protein import and mediates docking of import substrate to distinct nucleoporins. This Dictyostelium discoideum (Social amoeba) protein is Importin-13 homolog A (ipo13A).